We begin with the raw amino-acid sequence, 92 residues long: Small ribosomal subunit protein uS19c (92 aa).

Belongs to the universal ribosomal protein uS19 family.

The protein localises to the plastid. The protein resides in the chloroplast. Its function is as follows. Protein S19 forms a complex with S13 that binds strongly to the 16S ribosomal RNA. This Porphyra purpurea (Red seaweed) protein is Small ribosomal subunit protein uS19c (rps19).